The primary structure comprises 602 residues: Laccase 1 (602 aa).

An N-terminal signal peptide occupies residues 1-20 (MDHFARVSLVAALLYTNTWA). Plastocyanin-like domains lie at 30–128 (TWEE…VRPK) and 157–345 (YLVV…RIPN). Cu cation-binding residues include His-78, His-80, His-108, and His-110. N-linked (GlcNAc...) asparagine glycans are attached at residues Asn-176, Asn-241, Asn-264, Asn-388, Asn-430, Asn-454, and Asn-470. Residues 461 to 584 (NEGLLLRTRN…GGMGMVIMDG (124 aa)) enclose the Plastocyanin-like 3 domain. Positions 492, 495, and 497 each coordinate Cu cation. Asn-512 carries an N-linked (GlcNAc...) asparagine glycan. Residues His-566, Cys-567, His-568, and His-572 each coordinate Cu cation.

The protein belongs to the multicopper oxidase family. It depends on Cu cation as a cofactor.

It is found in the cell surface. It functions in the pathway pigment biosynthesis. Laccase; part of the Pks1 gene cluster that mediates the biosynthesis of an anthraquinone derivative pigment that contributes to conidial pigmentation that provides protection from UV radiation, heat and cold stress. The polyketide synthase Pks1 produces 1-acetyl-2,4,6,8-tetrahydroxy-9,10-anthraquinone though condensation of acetyl-CoA with malonyl-CoA. The dehydratase EthD and the laccase Mlac1 further convert the anthraquinone derivative into the final conidial pigment. The polypeptide is Laccase 1 (Metarhizium album (strain ARSEF 1941)).